The following is a 410-amino-acid chain: Class E basic helix-loop-helix protein 41 (410 aa).

Residue Lys-31 forms a Glycyl lysine isopeptide (Lys-Gly) (interchain with G-Cter in SUMO2) linkage. The 56-residue stretch at 44 to 99 (TYKLPHRLIEKKRRDRINECIAQLKDLLPEHLKLTTLGHLEKAVVLELTLKHLKAL) folds into the bHLH domain. Lys-121 is covalently cross-linked (Glycyl lysine isopeptide (Lys-Gly) (interchain with G-Cter in SUMO2)). The region spanning 131–166 (FHSGFQTCAKEVLQYLARFESWTPREPRCAQLVSHL) is the Orange domain. 2 disordered regions span residues 209-251 (IQRT…SAAP) and 371-410 (EVAP…KDAP). Lys-240 is covalently cross-linked (Glycyl lysine isopeptide (Lys-Gly) (interchain with G-Cter in SUMO2)).

As to quaternary structure, homodimer. Heterodimer with BHLHE40/DEC1. Interacts with CIART. Interacts with BMAL1 and RXRA. Interacts with NR0B2 and HNF1A. Highly expressed in the caudate putamen, pineal gland, granular cell layer of the cerebellum, olfactory bulb, piriform cortex, hippocampus and hypothalamic nuclei. Moderately expressed in skeletal muscle, heart. Weakly expressed in lung.

The protein localises to the nucleus. Its function is as follows. Transcriptional repressor involved in the regulation of the circadian rhythm by negatively regulating the activity of the clock genes and clock-controlled genes. Acts as the negative limb of a novel autoregulatory feedback loop (DEC loop) which differs from the one formed by the PER and CRY transcriptional repressors (PER/CRY loop). Both these loops are interlocked as it represses the expression of PER1 and in turn is repressed by PER1/2 and CRY1/2. Represses the activity of the circadian transcriptional activator: CLOCK-BMAL1 heterodimer by competing for the binding to E-box elements (5'-CACGTG-3') found within the promoters of its target genes. Negatively regulates its own expression and the expression of DBP and BHLHE41/DEC2. Acts as a corepressor of RXR and the RXR-LXR heterodimers and represses the ligand-induced RXRA/B/G, NR1H3/LXRA, NR1H4 and VDR transactivation activity. Inhibits HNF1A-mediated transactivation of CYP1A2, CYP2E1 and CYP3A11. The polypeptide is Class E basic helix-loop-helix protein 41 (Bhlhb3) (Rattus norvegicus (Rat)).